The following is a 95-amino-acid chain: Co-chaperonin GroES (95 aa).

The protein belongs to the GroES chaperonin family. In terms of assembly, heptamer of 7 subunits arranged in a ring. Interacts with the chaperonin GroEL.

The protein localises to the cytoplasm. In terms of biological role, together with the chaperonin GroEL, plays an essential role in assisting protein folding. The GroEL-GroES system forms a nano-cage that allows encapsulation of the non-native substrate proteins and provides a physical environment optimized to promote and accelerate protein folding. GroES binds to the apical surface of the GroEL ring, thereby capping the opening of the GroEL channel. This is Co-chaperonin GroES from Alkalilimnicola ehrlichii (strain ATCC BAA-1101 / DSM 17681 / MLHE-1).